The following is a 138-amino-acid chain: SPbeta prophage-derived uncharacterized protein YopJ (138 aa).

The polypeptide is SPbeta prophage-derived uncharacterized protein YopJ (yopJ) (Bacillus subtilis (strain 168)).